The primary structure comprises 290 residues: Glycine-N-acyltransferase-like protein 3 (290 aa).

It carries out the reaction an acyl-CoA + glycine = an N-acylglycine + CoA + H(+). The catalysed reaction is (9Z)-octadecenoyl-CoA + glycine = N-(9Z-octadecenoyl)glycine + CoA + H(+). The enzyme catalyses hexadecanoyl-CoA + glycine = N-hexadecanoylglycine + CoA + H(+). The protein operates within lipid metabolism. In terms of biological role, catalyzes the conjugation of long-chain fatty acyl-CoA thioester and glycine to produce long-chain N-(fatty acyl)glycine, an intermediate in the primary fatty acid amide biosynthetic pathway. This is Glycine-N-acyltransferase-like protein 3 from Mus musculus (Mouse).